We begin with the raw amino-acid sequence, 235 residues long: Large ribosomal subunit protein uL4 (235 aa).

Residues 45–75 form a disordered region; it reads RAGTASTKTRGEVSGGGRKPWPQKHTGRARH. Residues 65 to 75 are compositionally biased toward basic residues; the sequence is WPQKHTGRARH.

The protein belongs to the universal ribosomal protein uL4 family. Part of the 50S ribosomal subunit.

Its function is as follows. One of the primary rRNA binding proteins, this protein initially binds near the 5'-end of the 23S rRNA. It is important during the early stages of 50S assembly. It makes multiple contacts with different domains of the 23S rRNA in the assembled 50S subunit and ribosome. Forms part of the polypeptide exit tunnel. This chain is Large ribosomal subunit protein uL4, found in Thermotoga petrophila (strain ATCC BAA-488 / DSM 13995 / JCM 10881 / RKU-1).